A 142-amino-acid chain; its full sequence is Small ribosomal subunit protein uS12 (142 aa).

The protein belongs to the universal ribosomal protein uS12 family. As to quaternary structure, part of the 30S ribosomal subunit.

In terms of biological role, with S4 and S5 plays an important role in translational accuracy. Located at the interface of the 30S and 50S subunits. This chain is Small ribosomal subunit protein uS12, found in Methanocorpusculum labreanum (strain ATCC 43576 / DSM 4855 / Z).